The chain runs to 415 residues: Serine--tRNA ligase (415 aa).

230 to 232 (TAE) is an L-serine binding site. ATP is bound at residue 261 to 263 (RKE). Glu284 contributes to the L-serine binding site. 348-351 (EISS) contacts ATP. Ser382 serves as a coordination point for L-serine.

The protein belongs to the class-II aminoacyl-tRNA synthetase family. Type-1 seryl-tRNA synthetase subfamily. Homodimer. The tRNA molecule binds across the dimer.

The protein localises to the cytoplasm. The catalysed reaction is tRNA(Ser) + L-serine + ATP = L-seryl-tRNA(Ser) + AMP + diphosphate + H(+). It catalyses the reaction tRNA(Sec) + L-serine + ATP = L-seryl-tRNA(Sec) + AMP + diphosphate + H(+). The protein operates within aminoacyl-tRNA biosynthesis; selenocysteinyl-tRNA(Sec) biosynthesis; L-seryl-tRNA(Sec) from L-serine and tRNA(Sec): step 1/1. Functionally, catalyzes the attachment of serine to tRNA(Ser). Is also able to aminoacylate tRNA(Sec) with serine, to form the misacylated tRNA L-seryl-tRNA(Sec), which will be further converted into selenocysteinyl-tRNA(Sec). In Sulfurimonas denitrificans (strain ATCC 33889 / DSM 1251) (Thiomicrospira denitrificans (strain ATCC 33889 / DSM 1251)), this protein is Serine--tRNA ligase.